Reading from the N-terminus, the 81-residue chain is Sulfur carrier protein TusA (81 aa).

The active-site Cysteine persulfide intermediate is Cys19.

The protein belongs to the sulfur carrier protein TusA family. As to quaternary structure, interacts with IscS.

The protein resides in the cytoplasm. It participates in tRNA modification. In terms of biological role, sulfur carrier protein involved in sulfur trafficking in the cell. Part of a sulfur-relay system required for 2-thiolation during synthesis of 2-thiouridine of the modified wobble base 5-methylaminomethyl-2-thiouridine (mnm(5)s(2)U) in tRNA. Interacts with IscS and stimulates its cysteine desulfurase activity. Accepts an activated sulfur from IscS, which is then transferred to TusD, and thus determines the direction of sulfur flow from IscS to 2-thiouridine formation. Also appears to be involved in sulfur transfer for the biosynthesis of molybdopterin. In Shigella boydii serotype 18 (strain CDC 3083-94 / BS512), this protein is Sulfur carrier protein TusA.